Reading from the N-terminus, the 841-residue chain is Probable alpha-glucuronidase A (841 aa).

The N-terminal stretch at 1–20 (MRGLNLFQLILALLLSMVAA) is a signal peptide. 15 N-linked (GlcNAc...) asparagine glycosylation sites follow: Asn51, Asn76, Asn85, Asn149, Asn222, Asn279, Asn310, Asn343, Asn450, Asn465, Asn527, Asn576, Asn682, Asn723, and Asn732.

It belongs to the glycosyl hydrolase 67 family.

It localises to the secreted. The catalysed reaction is an alpha-D-glucuronoside + H2O = D-glucuronate + an alcohol. Its function is as follows. Alpha-glucuronidase involved in the hydrolysis of xylan, a major structural heterogeneous polysaccharide found in plant biomass representing the second most abundant polysaccharide in the biosphere, after cellulose. Releases 4-O-methylglucuronic acid from xylan. This Aspergillus niger (strain ATCC MYA-4892 / CBS 513.88 / FGSC A1513) protein is Probable alpha-glucuronidase A (aguA).